The primary structure comprises 124 residues: Small ribosomal subunit protein uS13 (124 aa).

Residues 98–124 (VRGQRTRCNARTRKGPRKTVGAKRKEK) form a disordered region.

It belongs to the universal ribosomal protein uS13 family. Part of the 30S ribosomal subunit. Forms a loose heterodimer with protein S19. Forms two bridges to the 50S subunit in the 70S ribosome.

In terms of biological role, located at the top of the head of the 30S subunit, it contacts several helices of the 16S rRNA. In the 70S ribosome it contacts the 23S rRNA (bridge B1a) and protein L5 of the 50S subunit (bridge B1b), connecting the 2 subunits; these bridges are implicated in subunit movement. Contacts the tRNAs in the A and P-sites. The sequence is that of Small ribosomal subunit protein uS13 from Dictyoglomus turgidum (strain DSM 6724 / Z-1310).